A 30-amino-acid chain; its full sequence is Natriuretic peptides A (30 aa).

The propeptide occupies Ala-1–Arg-3. A disulfide bond links Cys-11 and Cys-27.

This sequence belongs to the natriuretic peptide family. Cleaved upon secretion to produce the functional hormone.

Its subcellular location is the secreted. Functionally, hormone playing a key role in cardiovascular homeostasis through regulation of natriuresis, diuresis, and vasodilation. Has a cGMP-stimulating activity. In Pelophylax ridibundus (Marsh frog), this protein is Natriuretic peptides A.